A 975-amino-acid polypeptide reads, in one-letter code: MAAEEVLQTVDHYKTEIERLTKELTETTHEKIQAAEYGLVVLEEKLTLKQQYDELEAEYDSLKQELEQLKEAFGQSFSIHRKVAEDGETREETLLQESASKEAYYLGKILEMQNELKQSRAVVTNVQAENERLTAVVQDLKENNEMVELQRIRMKDEIREYKFREARLLQDYTELEEENITLQKLVSTLKQNQVEYEGLKHEIKRFEEETVLLNSQLEDAIRLKEIAEHQLEEALETLKNEREQKNNLRKELSQYISLNDNHISISVDGLKFAEDGSEPNNDDKMNGHIHGPLVKLNGDYRTPTLRKGESLNPVSDLFSELNISEIQKLKQQLMQVEREKAILLANLQESQTQLEHTKGALTEQHERVHRLTEHVNAMRGLQSSKELKAELDGEKGRDSGEEAHDYEVDINGLEILECKYRVAVTEVIDLKAEIKALKEKYNKSVENYTDEKAKYESKIQMYDEQVTSLEKTTKESGEKMAHMEKELQKMTSIANENHSTLNTAQDELVTFSEELAQLYHHVCLCNNETPNRVMLDYYRQSRVTRSGSLKGPDDPRGLLSPRLARRGVSSPVETRTSSEPVAKESTEASKEPSPTKTPTISPVITAPPSSPVLDTSDIRKEPMNIYNLNAIIRDQIKHLQKAVDRSLQLSRQRAAARELAPMIDKDKEALMEEILKLKSLLSTKREQIATLRAVLKANKQTAEVALANLKNKYENEKAMVTETMTKLRNELKALKEDAATFSSLRAMFATRCDEYVTQLDEMQRQLAAAEDEKKTLNTLLRMAIQQKLALTQRLEDLEFDHEQSRRSKGKLGKSKIGSPKVSGEASVTVPTIDTYLLHSQGPQTPNIRVSSGTQRKRQFSPSLCDQSRPRTSGASYLQNLLRVPPDPTSTESFLLKGPPSMSEFIQGHRLSKEKRLTVAPPDCQQPAASVPPQCSQLAGRQDCPTVSPDTALPEEQPHSSSQCAPLHCLSKPPHP.

2 coiled-coil regions span residues 1 to 265 (MAAE…HISI) and 319 to 496 (SELN…IANE). 5 disordered regions span residues 383 to 403 (SSKE…GEEA), 545 to 616 (RSGS…LDTS), 800 to 824 (DHEQ…VSGE), 836 to 877 (LLHS…ASYL), and 922 to 975 (DCQQ…PPHP). Composition is skewed to basic and acidic residues over residues 385–403 (KELK…GEEA) and 581–590 (VAKESTEASK). Over residues 592 to 602 (PSPTKTPTISP) the composition is skewed to polar residues. The stretch at 663–803 (IDKDKEALME…LEDLEFDHEQ (141 aa)) forms a coiled coil. The tract at residues 663–803 (IDKDKEALME…LEDLEFDHEQ (141 aa)) is interaction with RAB6A. Polar residues predominate over residues 840 to 877 (QGPQTPNIRVSSGTQRKRQFSPSLCDQSRPRTSGASYL).

Belongs to the BicD family. As to quaternary structure, interacts with RAB6A. Interacts (via C-terminus) with RAB6B (GTP-bound); the interaction is direct. Interacts with CLIP-115 and KIFC2. In terms of assembly, (Microbial infection) Interacts with human cytomegalovirus/HHV-5 protein UL32. Expressed in the brain, heart and skeletal muscle.

It localises to the golgi apparatus. Regulates coat complex coatomer protein I (COPI)-independent Golgi-endoplasmic reticulum transport by recruiting the dynein-dynactin motor complex. The chain is Protein bicaudal D homolog 1 (BICD1) from Homo sapiens (Human).